An 89-amino-acid chain; its full sequence is Translation initiation factor IF-1 1 (89 aa).

An S1-like domain is found at 1–73 (MSNKEQLIEM…TKGRITFRHL (73 aa)).

It belongs to the IF-1 family. In terms of assembly, component of the 30S ribosomal translation pre-initiation complex which assembles on the 30S ribosome in the order IF-2 and IF-3, IF-1 and N-formylmethionyl-tRNA(fMet); mRNA recruitment can occur at any time during PIC assembly.

It is found in the cytoplasm. Its function is as follows. One of the essential components for the initiation of protein synthesis. Stabilizes the binding of IF-2 and IF-3 on the 30S subunit to which N-formylmethionyl-tRNA(fMet) subsequently binds. Helps modulate mRNA selection, yielding the 30S pre-initiation complex (PIC). Upon addition of the 50S ribosomal subunit IF-1, IF-2 and IF-3 are released leaving the mature 70S translation initiation complex. This is Translation initiation factor IF-1 1 from Acidovorax sp. (strain JS42).